The sequence spans 554 residues: Acurin A biosynthesis cluster MFS-type transporter (554 aa).

The next 5 helical transmembrane spans lie at 24-44 (WLIF…TSII), 60-80 (LYIW…AIVG), 96-116 (LLIF…GMLL), 123-143 (GLGG…MVSL), and 151-171 (GILG…GGGF). A glycan (N-linked (GlcNAc...) asparagine) is linked at N174. 3 helical membrane-spanning segments follow: residues 179 to 199 (WIFY…VTLL), 219 to 239 (WGGI…LTWA), and 251 to 271 (IVPL…EALP). N283 carries an N-linked (GlcNAc...) asparagine glycan. A run of 6 helical transmembrane segments spans residues 289–309 (LFVM…FLPI), 324–344 (VMLF…GILM), 352–372 (SFQY…TLLD), 385–405 (ILFG…ILAS), 417–437 (TWIF…AAVF), and 496–516 (VWQV…LVKA).

It belongs to the major facilitator superfamily.

The protein resides in the membrane. Its function is as follows. MFS-type transporter that may have a role in the biosynthesis of acurin A, a highly reduced polyketide coupled to a serine via a peptide bond; either in extra- or intracellular transport. This Aspergillus aculeatus (strain ATCC 16872 / CBS 172.66 / WB 5094) protein is Acurin A biosynthesis cluster MFS-type transporter.